A 159-amino-acid polypeptide reads, in one-letter code: SsrA-binding protein (159 aa).

It belongs to the SmpB family.

It localises to the cytoplasm. Required for rescue of stalled ribosomes mediated by trans-translation. Binds to transfer-messenger RNA (tmRNA), required for stable association of tmRNA with ribosomes. tmRNA and SmpB together mimic tRNA shape, replacing the anticodon stem-loop with SmpB. tmRNA is encoded by the ssrA gene; the 2 termini fold to resemble tRNA(Ala) and it encodes a 'tag peptide', a short internal open reading frame. During trans-translation Ala-aminoacylated tmRNA acts like a tRNA, entering the A-site of stalled ribosomes, displacing the stalled mRNA. The ribosome then switches to translate the ORF on the tmRNA; the nascent peptide is terminated with the 'tag peptide' encoded by the tmRNA and targeted for degradation. The ribosome is freed to recommence translation, which seems to be the essential function of trans-translation. The sequence is that of SsrA-binding protein from Frankia casuarinae (strain DSM 45818 / CECT 9043 / HFP020203 / CcI3).